The sequence spans 62 residues: ATP synthase subunit epsilon, mitochondrial (62 aa).

Threonine 52 bears the Phosphothreonine mark.

Belongs to the eukaryotic ATPase epsilon family. F-type ATPases have 2 components, CF(1) - the catalytic core - and CF(0) - the membrane proton channel. CF(1) has five subunits: alpha(3), beta(3), gamma(1), delta(1), epsilon(1). CF(0) has three main subunits: a, b and c.

The protein localises to the mitochondrion. Its subcellular location is the mitochondrion inner membrane. Its function is as follows. Mitochondrial membrane ATP synthase (F(1)F(0) ATP synthase or Complex V) produces ATP from ADP in the presence of a proton gradient across the membrane which is generated by electron transport complexes of the respiratory chain. F-type ATPases consist of two structural domains, F(1) - containing the extramembraneous catalytic core, and F(0) - containing the membrane proton channel, linked together by a central stalk and a peripheral stalk. During catalysis, ATP synthesis in the catalytic domain of F(1) is coupled via a rotary mechanism of the central stalk subunits to proton translocation. Part of the complex F(1) domain and of the central stalk which is part of the complex rotary element. Rotation of the central stalk against the surrounding alpha(3)beta(3) subunits leads to hydrolysis of ATP in three separate catalytic sites on the beta subunits. The polypeptide is ATP synthase subunit epsilon, mitochondrial (ATP15) (Saccharomyces cerevisiae (strain ATCC 204508 / S288c) (Baker's yeast)).